The primary structure comprises 347 residues: Quinolinate synthase (347 aa).

The iminosuccinate site is built by histidine 47 and serine 68. Residue cysteine 113 coordinates [4Fe-4S] cluster. Residues 139-141 (YAN) and serine 156 contribute to the iminosuccinate site. Cysteine 200 contacts [4Fe-4S] cluster. Iminosuccinate-binding positions include 226 to 228 (HPE) and threonine 243. Residue cysteine 297 coordinates [4Fe-4S] cluster.

Belongs to the quinolinate synthase family. Type 1 subfamily. [4Fe-4S] cluster serves as cofactor.

Its subcellular location is the cytoplasm. The enzyme catalyses iminosuccinate + dihydroxyacetone phosphate = quinolinate + phosphate + 2 H2O + H(+). It functions in the pathway cofactor biosynthesis; NAD(+) biosynthesis; quinolinate from iminoaspartate: step 1/1. Catalyzes the condensation of iminoaspartate with dihydroxyacetone phosphate to form quinolinate. In Shigella boydii serotype 4 (strain Sb227), this protein is Quinolinate synthase.